Here is a 156-residue protein sequence, read N- to C-terminus: Adult-specific rigid cuticular protein 15.5 (156 aa).

The 62-residue stretch at 23-84 folds into the Chitin-binding type R&amp;R domain; that stretch reads IGNYAFNYGT…SVKTNEPGTA (62 aa).

Functionally, component of the rigid cuticle of the spider. The polypeptide is Adult-specific rigid cuticular protein 15.5 (Araneus diadematus (European garden spider)).